A 344-amino-acid chain; its full sequence is Meiotically up-regulated gene 10 protein (344 aa).

In terms of domain architecture, DH spans 48 to 207 (EFNSILQEII…RELCSYIDQE (160 aa)).

It is found in the cytoplasm. Its subcellular location is the nucleus. Its function is as follows. Has a role in meiosis. In Schizosaccharomyces pombe (strain 972 / ATCC 24843) (Fission yeast), this protein is Meiotically up-regulated gene 10 protein (mug10).